A 233-amino-acid chain; its full sequence is Large ribosomal subunit protein uL1 (233 aa).

Belongs to the universal ribosomal protein uL1 family. As to quaternary structure, part of the 50S ribosomal subunit.

In terms of biological role, binds directly to 23S rRNA. The L1 stalk is quite mobile in the ribosome, and is involved in E site tRNA release. Its function is as follows. Protein L1 is also a translational repressor protein, it controls the translation of the L11 operon by binding to its mRNA. The polypeptide is Large ribosomal subunit protein uL1 (Parvibaculum lavamentivorans (strain DS-1 / DSM 13023 / NCIMB 13966)).